A 230-amino-acid chain; its full sequence is Cytochrome c oxidase subunit 2 (230 aa).

Over 1–14 (MAHPAQLGFQDAAS) the chain is Mitochondrial intermembrane. Residues 15-45 (PVMEELLCFHDHALMIVFLISTLVLYIIIAM) traverse the membrane as a helical segment. The Mitochondrial matrix portion of the chain corresponds to 46–59 (VSTKLTNKFILDSQ). A helical transmembrane segment spans residues 60-87 (EIEIVWTVLPAIILILIALPSLRILYLM). The Mitochondrial intermembrane segment spans residues 88-230 (DEINDPHVTI…NWSSAMLEDA (143 aa)). Cu cation contacts are provided by H161, C196, E198, C200, H204, and M207. E198 contacts Mg(2+).

Belongs to the cytochrome c oxidase subunit 2 family. As to quaternary structure, component of the cytochrome c oxidase (complex IV, CIV), a multisubunit enzyme composed of 14 subunits. The complex is composed of a catalytic core of 3 subunits MT-CO1, MT-CO2 and MT-CO3, encoded in the mitochondrial DNA, and 11 supernumerary subunits COX4I, COX5A, COX5B, COX6A, COX6B, COX6C, COX7A, COX7B, COX7C, COX8 and NDUFA4, which are encoded in the nuclear genome. The complex exists as a monomer or a dimer and forms supercomplexes (SCs) in the inner mitochondrial membrane with NADH-ubiquinone oxidoreductase (complex I, CI) and ubiquinol-cytochrome c oxidoreductase (cytochrome b-c1 complex, complex III, CIII), resulting in different assemblies (supercomplex SCI(1)III(2)IV(1) and megacomplex MCI(2)III(2)IV(2)). Found in a complex with TMEM177, COA6, COX18, COX20, SCO1 and SCO2. Interacts with TMEM177 in a COX20-dependent manner. Interacts with COX20. Interacts with COX16. Requires Cu cation as cofactor.

It localises to the mitochondrion inner membrane. It carries out the reaction 4 Fe(II)-[cytochrome c] + O2 + 8 H(+)(in) = 4 Fe(III)-[cytochrome c] + 2 H2O + 4 H(+)(out). Component of the cytochrome c oxidase, the last enzyme in the mitochondrial electron transport chain which drives oxidative phosphorylation. The respiratory chain contains 3 multisubunit complexes succinate dehydrogenase (complex II, CII), ubiquinol-cytochrome c oxidoreductase (cytochrome b-c1 complex, complex III, CIII) and cytochrome c oxidase (complex IV, CIV), that cooperate to transfer electrons derived from NADH and succinate to molecular oxygen, creating an electrochemical gradient over the inner membrane that drives transmembrane transport and the ATP synthase. Cytochrome c oxidase is the component of the respiratory chain that catalyzes the reduction of oxygen to water. Electrons originating from reduced cytochrome c in the intermembrane space (IMS) are transferred via the dinuclear copper A center (CU(A)) of subunit 2 and heme A of subunit 1 to the active site in subunit 1, a binuclear center (BNC) formed by heme A3 and copper B (CU(B)). The BNC reduces molecular oxygen to 2 water molecules using 4 electrons from cytochrome c in the IMS and 4 protons from the mitochondrial matrix. The protein is Cytochrome c oxidase subunit 2 (mt-co2) of Danio rerio (Zebrafish).